We begin with the raw amino-acid sequence, 359 residues long: Protein Wnt-9b (359 aa).

The signal sequence occupies residues 1 to 23 (MRPAPALALAALCLLVLPAAAAA). Intrachain disulfides connect Cys91–Cys102, Cys137–Cys145, Cys147–Cys164, Cys212–Cys226, Cys214–Cys221, Cys293–Cys318, Cys307–Cys313, Cys317–Cys357, Cys333–Cys348, Cys335–Cys345, and Cys340–Cys341. An N-linked (GlcNAc...) asparagine glycan is attached at Asn101. Ser218 is lipidated: O-palmitoleoyl serine; by PORCN.

The protein belongs to the Wnt family. In terms of assembly, forms a soluble 1:1 complex with AFM; this prevents oligomerization and is required for prolonged biological activity. The complex with AFM may represent the physiological form in body fluids. Component of the Wnt-Fzd-LRP5-LRP6 signaling complex that contains a WNT protein, a FZD protein and LRP5 or LRP6. Interacts directly in the complex with LRP6. Interacts with PKD1 (via extracellular domain). In terms of processing, palmitoleoylation is required for efficient binding to frizzled receptors. Depalmitoleoylation leads to Wnt signaling pathway inhibition.

It localises to the secreted. The protein resides in the extracellular space. The protein localises to the extracellular matrix. Functionally, ligand for members of the frizzled family of seven transmembrane receptors. Functions in the canonical Wnt/beta-catenin signaling pathway. Required for normal embryonic kidney development, and for normal development of the urogenital tract, including uterus and part of the oviduct and the upper vagina in females, and epididymis and vas deferens in males. Activates a signaling cascade in the metanephric mesenchyme that induces tubulogenesis. Acts upstream of WNT4 in the signaling pathways that mediate development of kidney tubules and the Muellerian ducts. Plays a role in cranofacial development and is required for normal fusion of the palate during embryonic development. In Mus musculus (Mouse), this protein is Protein Wnt-9b (Wnt9b).